Consider the following 219-residue polypeptide: Uracil-DNA glycosylase (219 aa).

Asp62 serves as the catalytic Proton acceptor.

This sequence belongs to the uracil-DNA glycosylase (UDG) superfamily. UNG family.

Its subcellular location is the cytoplasm. The enzyme catalyses Hydrolyzes single-stranded DNA or mismatched double-stranded DNA and polynucleotides, releasing free uracil.. In terms of biological role, excises uracil residues from the DNA which can arise as a result of misincorporation of dUMP residues by DNA polymerase or due to deamination of cytosine. The chain is Uracil-DNA glycosylase from Lactococcus lactis subsp. cremoris (strain MG1363).